Here is a 171-residue protein sequence, read N- to C-terminus: 3-hydroxydecanoyl-[acyl-carrier-protein] dehydratase (171 aa).

H70 is an active-site residue.

Belongs to the thioester dehydratase family. FabA subfamily. Homodimer.

It is found in the cytoplasm. The catalysed reaction is a (3R)-hydroxyacyl-[ACP] = a (2E)-enoyl-[ACP] + H2O. It carries out the reaction (3R)-hydroxydecanoyl-[ACP] = (2E)-decenoyl-[ACP] + H2O. The enzyme catalyses (2E)-decenoyl-[ACP] = (3Z)-decenoyl-[ACP]. It functions in the pathway lipid metabolism; fatty acid biosynthesis. In terms of biological role, necessary for the introduction of cis unsaturation into fatty acids. Catalyzes the dehydration of (3R)-3-hydroxydecanoyl-ACP to E-(2)-decenoyl-ACP and then its isomerization to Z-(3)-decenoyl-ACP. Can catalyze the dehydratase reaction for beta-hydroxyacyl-ACPs with saturated chain lengths up to 16:0, being most active on intermediate chain length. The polypeptide is 3-hydroxydecanoyl-[acyl-carrier-protein] dehydratase (Shewanella loihica (strain ATCC BAA-1088 / PV-4)).